Reading from the N-terminus, the 411-residue chain is Intracellular hyaluronan-binding protein 4 (411 aa).

Phosphoserine occurs at positions 7 and 36. The stretch at 42–62 forms a coiled coil; sequence LREAEHRRQQQLQRKRRDEAA. The segment at 42–271 is disordered; the sequence is LREAEHRRQQ…ECQGTLDEES (230 aa). At R70 the chain carries Omega-N-methylarginine. S74 bears the Phosphoserine mark. Over residues 87–97 the composition is skewed to basic and acidic residues; it reads GRRESQKERKS. S108 bears the Phosphoserine mark. Basic and acidic residues-rich tracts occupy residues 138 to 181 and 205 to 229; these read VLER…DRPL and DSFDQRGKRDFERYSSNDKTNRMED. Glycyl lysine isopeptide (Lys-Gly) (interchain with G-Cter in SUMO1); alternate cross-links involve residues K212 and K274. Glycyl lysine isopeptide (Lys-Gly) (interchain with G-Cter in SUMO2); alternate cross-links involve residues K212 and K274. Residues 279-301 adopt a coiled-coil conformation; it reads EVEEENQVQEMTLDEWKNLQEQT. The segment covering 296-313 has biased composition (basic and acidic residues); sequence NLQEQTRPKPEFNIRKPE. A disordered region spans residues 296–318; it reads NLQEQTRPKPEFNIRKPESTVPS. A Glycyl lysine isopeptide (Lys-Gly) (interchain with G-Cter in SUMO1); alternate cross-link involves residue K334. K334 is covalently cross-linked (Glycyl lysine isopeptide (Lys-Gly) (interchain with G-Cter in SUMO2); alternate). A phosphothreonine; by PKC mark is found at T352 and T373. The disordered stretch occupies residues 358-411; it reads NFGNLPRPGRGARGSTRGGRGRMRRTENYGPRAEVVTQDVAPNPDDPEDFPALA. A compositionally biased stretch (acidic residues) spans 402–411; the sequence is DDPEDFPALA.

This sequence belongs to the SERBP1-HABP4 family. Associates with ribosomes; promoting ribosome stabilization. Interacts with EEF2/eEF2; promoting ribosome stabilization. Interacts with FMR1. Interacts with FXR1 and FXR2. Interacts with CHD3 (via C-terminus). Interacts (via C-terminus) with RACK1. Interacts with p53/TP53. Interacts (via N-terminus) with SRSF9; this interaction is direct. Interacts with SYNCRIP; this interaction is direct. Interacts with MEF2C (via N-terminus); this interaction decreases DNA-binding activity of MEF2C in myocardial cells in response to mechanical stress. Interacts with PRMT1 (via N-terminus). Interacts with SPIN1. In terms of processing, phosphorylated by phorbol 12-myristate 13-acetate (PMA)-activated PKC isoforms at Thr-352 and Thr-373. Methylated. Methylation is decreased by phorbol 12-myristate 13-acetate (PMA)-activated PKC, in vitro. Expressed in adult heart, brain, liver, kidney, testis, and in various embryonic tissues, but not in adult spleen, lung or skeletal muscle.

It is found in the nucleus. Its subcellular location is the cytoplasm. The protein localises to the stress granule. The protein resides in the sarcoplasm. It localises to the nuclear body. It is found in the nucleolus. Its subcellular location is the nucleus speckle. The protein localises to the cajal body. The protein resides in the gem. Its function is as follows. Ribosome-binding protein that promotes ribosome hibernation, a process during which ribosomes are stabilized in an inactive state and preserved from proteasomal degradation. Acts via its association with EEF2/eEF2 factor at the A-site of the ribosome, promoting ribosome stabilization in an inactive state compatible with storage. Plays a key role in ribosome hibernation in the mature oocyte by promoting ribosome stabilization. Ribosomes, which are produced in large quantities during oogenesis, are stored and translationally repressed in the oocyte and early embryo. Also binds RNA, regulating transcription and pre-mRNA splicing. Binds (via C-terminus) to poly(U) RNA. Seems to play a role in PML-nuclear bodies formation. Negatively regulates DNA-binding activity of the transcription factor MEF2C in myocardial cells in response to mechanical stress. This Mus musculus (Mouse) protein is Intracellular hyaluronan-binding protein 4.